A 461-amino-acid polypeptide reads, in one-letter code: Fumarate hydratase class II (461 aa).

Substrate-binding positions include 97–99, 127–130, 137–139, and Thr185; these read SGT, HPND, and SSN. The active-site Proton donor/acceptor is His186. Ser316 is a catalytic residue. Residues Ser317 and 322–324 each bind substrate; that span reads KVN.

The protein belongs to the class-II fumarase/aspartase family. Fumarase subfamily. Homotetramer.

The protein localises to the cytoplasm. It catalyses the reaction (S)-malate = fumarate + H2O. Its pathway is carbohydrate metabolism; tricarboxylic acid cycle; (S)-malate from fumarate: step 1/1. Its function is as follows. Involved in the TCA cycle. Catalyzes the stereospecific interconversion of fumarate to L-malate. This chain is Fumarate hydratase class II, found in Staphylococcus aureus (strain Mu50 / ATCC 700699).